Consider the following 81-residue polypeptide: Defensin-like protein 144 (81 aa).

A signal peptide spans 1-24 (MKNSFRFSFTVITTFIICVLVSGA). Intrachain disulfides connect Cys-30–Cys-74, Cys-42–Cys-61, Cys-47–Cys-69, and Cys-51–Cys-71.

Belongs to the DEFL family.

The protein resides in the secreted. The chain is Defensin-like protein 144 (LCR10) from Arabidopsis thaliana (Mouse-ear cress).